An 81-amino-acid chain; its full sequence is Cytotoxin 1b (81 aa).

An N-terminal signal peptide occupies residues 1–21 (MKTLLLTLVVVTIVCLDLGYT). Disulfide bonds link cysteine 24-cysteine 42, cysteine 35-cysteine 59, cysteine 63-cysteine 74, and cysteine 75-cysteine 80.

Belongs to the three-finger toxin family. Short-chain subfamily. Type IA cytotoxin sub-subfamily. As to quaternary structure, monomer in solution; Homodimer and oligomer in the presence of negatively charged lipids forming a pore with a size ranging between 20 and 30 Angstroms. Expressed by the venom gland.

The protein resides in the secreted. It localises to the target cell membrane. In terms of biological role, shows cytolytic activity on many different cells by forming pore in lipid membranes. In vivo, increases heart rate or kills the animal by cardiac arrest. In addition, it binds to heparin with high affinity, interacts with Kv channel-interacting protein 1 (KCNIP1) in a calcium-independent manner, and binds to integrin alpha-V/beta-3 (ITGAV/ITGB3) with moderate affinity. The chain is Cytotoxin 1b from Naja atra (Chinese cobra).